We begin with the raw amino-acid sequence, 667 residues long: DNA ligase (667 aa).

Residues 32 to 36 (DSVYD), 81 to 82 (SL), and Glu-111 each bind NAD(+). Lys-113 functions as the N6-AMP-lysine intermediate in the catalytic mechanism. NAD(+) contacts are provided by Arg-134, Glu-168, Lys-285, and Lys-309. Positions 403, 406, 421, and 426 each coordinate Zn(2+). Positions 588-667 (VGDNPFAGKT…DNLIEQLNLI (80 aa)) constitute a BRCT domain.

It belongs to the NAD-dependent DNA ligase family. LigA subfamily. Mg(2+) is required as a cofactor. The cofactor is Mn(2+).

The catalysed reaction is NAD(+) + (deoxyribonucleotide)n-3'-hydroxyl + 5'-phospho-(deoxyribonucleotide)m = (deoxyribonucleotide)n+m + AMP + beta-nicotinamide D-nucleotide.. In terms of biological role, DNA ligase that catalyzes the formation of phosphodiester linkages between 5'-phosphoryl and 3'-hydroxyl groups in double-stranded DNA using NAD as a coenzyme and as the energy source for the reaction. It is essential for DNA replication and repair of damaged DNA. This Lysinibacillus sphaericus (strain C3-41) protein is DNA ligase.